Consider the following 638-residue polypeptide: Growth hormone receptor (638 aa).

The first 18 residues, 1–18, serve as a signal peptide directing secretion; it reads MDLWQLLLTLALAGSSDA. The Extracellular portion of the chain corresponds to 19 to 264; sequence FSGSEPTAAI…NQFTCEEDFY (246 aa). A glycan (N-linked (GlcNAc...) asparagine) is linked at Asn-46. Intrachain disulfides connect Cys-56–Cys-66 and Cys-101–Cys-112. A glycan (N-linked (GlcNAc...) asparagine) is linked at Asn-115. A disulfide bridge connects residues Cys-126 and Cys-140. The Fibronectin type-III domain occupies 151–254; that stretch reads PPIALNWTLL…EVLYVTLPQM (104 aa). Residues Asn-156, Asn-161, and Asn-200 are each glycosylated (N-linked (GlcNAc...) asparagine). Positions 240 to 244 match the WSXWS motif motif; it reads YGEFS. Residues 265-288 traverse the membrane as a helical segment; sequence FPWLLIIIFGIFGLTVMLFVFLFS. The Cytoplasmic segment spans residues 289–638; it reads KQQRIKMLIL…STDQLNKIMP (350 aa). A required for JAK2 binding region spans residues 294–379; that stretch reads KMLILPPVPV…HQKSHSNLGV (86 aa). A Box 1 motif motif is present at residues 297-305; it reads ILPPVPVPK. Positions 340–349 match the UbE motif motif; that stretch reads DSWVEFIELD. Ser-341 is modified (phosphoserine). The segment at 353-388 is disordered; the sequence is PDEKNEGSDTDRLLSSDHQKSHSNLGVKDGDSGRTS. The span at 356-372 shows a compositional bias: basic and acidic residues; that stretch reads KNEGSDTDRLLSSDHQK. Phosphotyrosine occurs at positions 487 and 595.

The protein belongs to the type I cytokine receptor family. Type 1 subfamily. As to quaternary structure, on growth hormone (GH) binding, forms homodimers and binds JAK2 via a box 1-containing domain. The soluble form (GHBP) is produced by phorbol ester-promoted proteolytic cleavage at the cell surface (shedding) by ADAM17/TACE. Shedding is inhibited by growth hormone (GH) binding to the receptor probably due to a conformational change in GHR rendering the receptor inaccessible to ADAM17. In terms of processing, on GH binding, phosphorylated on tyrosine residues in the cytoplasmic domain by JAK2. Post-translationally, ubiquitinated by the ECS(SOCS2) complex following ligand-binding and phosphorylation by JAK2, leading to its degradation by the proteasome. Regulation by the ECS(SOCS2) complex acts as a negative feedback loop of growth hormone receptor signaling. Ubiquitination is not sufficient for GHR internalization.

It localises to the cell membrane. It is found in the secreted. Functionally, receptor for pituitary gland growth hormone (GH1) involved in regulating postnatal body growth. On ligand binding, couples to the JAK2/STAT5 pathway. In terms of biological role, the soluble form (GHBP) acts as a reservoir of growth hormone in plasma and may be a modulator/inhibitor of GH signaling. This chain is Growth hormone receptor (GHR), found in Papio anubis (Olive baboon).